The following is a 1387-amino-acid chain: Magnesium-chelatase subunit ChlH, chloroplastic (1387 aa).

Residues 1–50 constitute a chloroplast transit peptide; that stretch reads MSSLVSTPFTTATGVQKKLGAPVPLHSFLLSRRQPAAGAGRGRAAAAAIR.

Belongs to the Mg-chelatase subunit H family. As to quaternary structure, the magnesium chelatase complex is a heterotrimer consisting of subunits CHLI, CHLD and CHLH.

It localises to the plastid. The protein resides in the chloroplast stroma. The protein localises to the chloroplast membrane. The enzyme catalyses protoporphyrin IX + Mg(2+) + ATP + H2O = Mg-protoporphyrin IX + ADP + phosphate + 3 H(+). It participates in porphyrin-containing compound metabolism; chlorophyll biosynthesis. Involved in chlorophyll biosynthesis. Catalyzes the insertion of magnesium ion into protoporphyrin IX to yield Mg-protoporphyrin IX. The reaction takes place in two steps, with an ATP-dependent activation followed by an ATP-dependent chelation step. May be involved in the plastid-to-nucleus retrograde signaling. In Oryza sativa subsp. indica (Rice), this protein is Magnesium-chelatase subunit ChlH, chloroplastic (CHLH).